A 202-amino-acid polypeptide reads, in one-letter code: Small ribosomal subunit protein uS4 (202 aa).

Basic residues predominate over residues 1 to 13 (MSRYRGPRLRVTR). Residues 1–42 (MSRYRGPRLRVTRRLGELPGLTRKASKKSNPPGQHGQARRKR) form a disordered region. Positions 90-152 (NRLDNVCFRL…KASKKLVEGN (63 aa)) constitute an S4 RNA-binding domain.

It belongs to the universal ribosomal protein uS4 family. As to quaternary structure, part of the 30S ribosomal subunit. Contacts protein S5. The interaction surface between S4 and S5 is involved in control of translational fidelity.

In terms of biological role, one of the primary rRNA binding proteins, it binds directly to 16S rRNA where it nucleates assembly of the body of the 30S subunit. Its function is as follows. With S5 and S12 plays an important role in translational accuracy. In Prochlorococcus marinus (strain MIT 9515), this protein is Small ribosomal subunit protein uS4.